The chain runs to 52 residues: Ribosome biogenesis protein Nop10 (52 aa).

Belongs to the NOP10 family.

In terms of biological role, involved in ribosome biogenesis; more specifically in 18S rRNA pseudouridylation and in cleavage of pre-rRNA. The chain is Ribosome biogenesis protein Nop10 from Methanococcus vannielii (strain ATCC 35089 / DSM 1224 / JCM 13029 / OCM 148 / SB).